Reading from the N-terminus, the 477-residue chain is Protein kinase C and casein kinase substrate in neurons protein 2 (477 aa).

An F-BAR domain is found at 11–282 (VEVSSDSFWE…AIKSADAMED (272 aa)). A coiled-coil region spans residues 25-274 (KRTVKRIDDG…SIYRELEYAI (250 aa)). 2 stretches are compositionally biased toward basic and acidic residues: residues 163–176 (CKEE…ETNS) and 186–216 (QLKK…KDLD). Disordered stretches follow at residues 163–218 (CKEE…LDGT) and 314–412 (RREK…PFDE). Positions 328–341 (GISQSGEQSSIQNQ) are enriched in low complexity. Residues 342-357 (HSSHLSVQSAQSTNNP) show a composition bias toward polar residues. The NPF1 signature appears at 356-358 (NPF). A compositionally biased stretch (basic and acidic residues) spans 370–388 (TENKKIENVGSYEKTHPAE). The span at 395-407 (NNPFNPSDTNGDN) shows a compositional bias: polar residues. The short motif at 396-398 (NPF) is the NPF2 element. The short motif at 408–410 (NPF) is the NPF3 element. Residues 417-477 (TLEVRVRALY…YPANYVESVQ (61 aa)) form the SH3 domain.

The protein belongs to the PACSIN family. As to quaternary structure, interacts with adam13 through the SH3 domains. Phosphorylated. In terms of tissue distribution, ubiquitously expressed with higher expression in the ectoderm, the neuroectoderm, and dorsal mesoderm layers.

It localises to the cytoplasm. It is found in the cytoskeleton. The protein resides in the cytoplasmic vesicle membrane. Its subcellular location is the cell projection. The protein localises to the ruffle membrane. It localises to the early endosome. It is found in the recycling endosome membrane. The protein resides in the cell membrane. Its subcellular location is the membrane. The protein localises to the caveola. It localises to the cell junction. It is found in the adherens junction. Regulates the morphogenesis and endocytosis of caveolae. Lipid-binding protein that is able to promote the tubulation of the phosphatidic acid-containing membranes it preferentially binds. Plays a role in intracellular vesicle-mediated transport. Involved in the endocytosis of cell-surface receptors like the EGF receptor, contributing to its internalization in the absence of EGF stimulus. The polypeptide is Protein kinase C and casein kinase substrate in neurons protein 2 (pacsin2) (Xenopus laevis (African clawed frog)).